The sequence spans 538 residues: Syncytin-2 (538 aa).

An N-terminal signal peptide occupies residues 1–15 (MGLLLLVLILTPSLA). Residues 16-478 (AYRHPDFPLL…GWLNWEGTWK (463 aa)) lie on the Extracellular side of the membrane. A CXXC motif is present at residues 43–46 (CWLC). Disulfide bonds link C43–C46, C43–C439, and C431–C438. N-linked (GlcNAc...) asparagine glycans are attached at residues N133, N146, N177, N220, N241, N247, N312, and N332. The segment at 354–374 (FIPLLAGLGILAGTGTGIAGI) is fusion peptide. A CKS-17 motif is present at residues 414–430 (LQNRRGLDMLTAAQGGI). A CX6CC motif is present at residues 431–439 (CLALDEKCC). N443 is a glycosylation site (N-linked (GlcNAc...) asparagine). The helical transmembrane segment at 479–499 (WFSWVLPLTGPLVSLLLLLLF) threads the bilayer. Residues 500–538 (GPCLLNLITQFVSSRLQAIKLQTNLSAGRHPRNIQESPF) lie on the Cytoplasmic side of the membrane.

The protein belongs to the gamma type-C retroviral envelope protein family. HERV class-I FRD env subfamily. In terms of assembly, the surface and transmembrane proteins form a heterodimer. They are attached by non-covalent interactions or by a labile interchain disulfide bond. Specific enzymatic cleavages in vivo yield the mature SU and TM proteins. In terms of processing, the CXXC motif is highly conserved across a broad range of retroviral envelope proteins. It is thought to participate in the formation of a labile disulfide bond possibly with the CX6CC motif present in the transmembrane protein.

The protein localises to the virion. It is found in the cell membrane. In terms of biological role, this endogenous retroviral envelope protein has retained its original fusogenic properties and participates in trophoblast fusion and the formation of a syncytium during placenta morphogenesis. The interaction with MFSD2A is apparently important for this process. Functionally, endogenous envelope proteins may have kept, lost or modified their original function during evolution but this one can still make pseudotypes with MLV, HIV-1 or SIV-1 virions and confer infectivity. Retroviral envelope proteins mediate receptor recognition and membrane fusion during early infection. The surface protein mediates receptor recognition, while the transmembrane protein anchors the envelope heterodimer to the viral membrane through one transmembrane domain. The other hydrophobic domain, called fusion peptide, mediates fusion of the viral membrane with the target cell membrane. This is Syncytin-2 (ERVFRD-1) from Pan troglodytes (Chimpanzee).